The sequence spans 535 residues: T-complex protein 1 subunit zeta (535 aa).

Belongs to the TCP-1 chaperonin family. As to quaternary structure, heterooligomeric complex of about 850 to 900 kDa that forms two stacked rings, 12 to 16 nm in diameter.

It is found in the cytoplasm. Its function is as follows. Molecular chaperone; assists the folding of proteins upon ATP hydrolysis. Known to play a role, in vitro, in the folding of actin and tubulin. This is T-complex protein 1 subunit zeta (cct6) from Schizosaccharomyces pombe (strain 972 / ATCC 24843) (Fission yeast).